Consider the following 253-residue polypeptide: tRNA pseudouridine synthase A (253 aa).

The active-site Nucleophile is the Asp51. Tyr110 lines the substrate pocket.

Belongs to the tRNA pseudouridine synthase TruA family. In terms of assembly, homodimer.

It carries out the reaction uridine(38/39/40) in tRNA = pseudouridine(38/39/40) in tRNA. Formation of pseudouridine at positions 38, 39 and 40 in the anticodon stem and loop of transfer RNAs. In Wolinella succinogenes (strain ATCC 29543 / DSM 1740 / CCUG 13145 / JCM 31913 / LMG 7466 / NCTC 11488 / FDC 602W) (Vibrio succinogenes), this protein is tRNA pseudouridine synthase A.